We begin with the raw amino-acid sequence, 704 residues long: Transmembrane protein DDB_G0274347 (704 aa).

Positions 37 to 145 (VEQRDEVNDE…NNYNNNNTPT (109 aa)) are disordered. Positions 43–67 (VNDEFQEEEEELEDDDDDEDDEDEI) are enriched in acidic residues. Over residues 85-99 (HNDKEKEKKKDKQEE) the composition is skewed to basic and acidic residues. Acidic residues predominate over residues 100 to 113 (YIDSDDDDDDDGDE). The segment covering 114–142 (NYYLNNNNNNNNNINNNNNYNNNNYNNNN) has biased composition (low complexity). The N-linked (GlcNAc...) asparagine glycan is linked to N166. A helical membrane pass occupies residues 255–275 (ALISMALLISLVAIIFYLPLP). N354 carries an N-linked (GlcNAc...) asparagine glycan. 3 consecutive transmembrane segments (helical) span residues 370–390 (LKIF…WLFA), 414–434 (TLLV…LYFI), and 513–533 (LVSF…FLIS). Residues 550–565 (TTTTTINTTTNTTSNT) are compositionally biased toward low complexity. Residues 550–576 (TTTTTINTTTNTTSNTSQQSNPLSKRL) form a disordered region. Residues N556, N560, and N564 are each glycosylated (N-linked (GlcNAc...) asparagine). Positions 566 to 576 (SQQSNPLSKRL) are enriched in polar residues. 2 helical membrane passes run 609–629 (FIIV…GVPP) and 638–658 (IFFI…LIII).

It localises to the membrane. The sequence is that of Transmembrane protein DDB_G0274347 from Dictyostelium discoideum (Social amoeba).